Reading from the N-terminus, the 202-residue chain is Ras-related protein RIC1 (202 aa).

GTP is bound by residues 15 to 23 (GDSGVGKSC), 33 to 40 (YLESYIST), 63 to 67 (DTAGQ), 121 to 124 (NKCD), and 151 to 153 (SAK). Positions 37–45 (YISTIGVDF) match the Effector region motif. Positions 174 to 185 (ASQPATNASKPA) are enriched in polar residues. The interval 174–202 (ASQPATNASKPATVQMRGQPVAQQSSCCS) is disordered. Residues cysteine 200 and cysteine 201 are each lipidated (S-geranylgeranyl cysteine).

Belongs to the small GTPase superfamily. Rab family.

It is found in the cell membrane. Its function is as follows. Possesses GTPase activity. This Oryza sativa subsp. japonica (Rice) protein is Ras-related protein RIC1 (RIC1).